We begin with the raw amino-acid sequence, 607 residues long: MIYNQALIEITKQGAVAVEEIKFSPPKLQTLISSIQNGGSPIINKNGSPAANALKNKQILQLQGQQQQQQQQQQNHSQQQHNNQSSVYSLNSLNPYYVQQVLCQLQKPHNFIKQVHVVVKNTPFGISMKSNDPQFNFHNYVIKATLLYDCDPPKMVDFIHNEPLQYVATVSEDGTEVVVDVKVGILSSQHQGSMFLAVLHISHTSVPSPSPNEPIMTILNNIGGNSIANLNSQLPNPIYNLCVVSHPIRIVSKVDHVKKEGIPILKKKTFHEILTDKLKKLQKFQDSQSKWIKNLYQQHLIEFDMEPYCSKKDQNNNNNNNNSNSNCQNGGGSICDDSSNSSTPSLSSYSNGNNKYNNNNNDSSESDESDDDDNNDDDDNDSIDFNISKQKNQQHLQQQLLNHQSKQQKVSSTNNNTTTTTSSSSASSIQQKQQPVQPQQQKQQNQSSNFQNSFNRVVEAFKYVPESERKDIITKMVEQLRSDDLEQLVATFMDELGVGDANSDVSSTKGGNNNNNNSIGCFCENCPSKKELERFQGLCMNFFVPQSTLNPMNNQQLLYSSLFSSSNDNNTQSQMNNSISVNNHHHHHHHQPNNSNLTNDLLQLPIV.

Disordered regions lie at residues 62–84 (LQGQ…HNNQ), 334–451 (ICDD…SNFQ), and 568–602 (DNNT…NDLL). The segment covering 334–363 (ICDDSSNSSTPSLSSYSNGNNKYNNNNNDS) has biased composition (low complexity). Acidic residues predominate over residues 364–382 (SESDESDDDDNNDDDDNDS). Composition is skewed to low complexity over residues 383–451 (IDFN…SNFQ) and 568–582 (DNNT…ISVN).

The chain is Developmental gene 1062 protein (DG1062) from Dictyostelium discoideum (Social amoeba).